The chain runs to 281 residues: Leukocyte antigen CD37 (281 aa).

Topologically, residues M1–V17 are cytoplasmic. The chain crosses the membrane as a helical span at residues F18 to I38. Residues D39–K59 lie on the Extracellular side of the membrane. A helical membrane pass occupies residues V60–L74. The Cytoplasmic segment spans residues G75–C85. Residues L86–Q111 form a helical membrane-spanning segment. Residues R112–N241 lie on the Extracellular side of the membrane. 3 N-linked (GlcNAc...) asparagine glycosylation sites follow: N170, N183, and N188. The helical transmembrane segment at L242–L266 threads the bilayer. The Cytoplasmic segment spans residues C267–R281.

It belongs to the tetraspanin (TM4SF) family. As to quaternary structure, interacts with SCIMP. Interacts with SOCS3. Interacts with DECTIN1/CLEC7A. In terms of processing, tyrosine phosphorylated; leading to activation of downstream signaling pathways. As to expression, B-lymphocytes. Antigen presenting cells.

The protein resides in the cell membrane. Functionally, structural component of specialized membrane microdomains known as tetraspanin-enriched microdomains (TERMs), which act as platforms for receptor clustering and signaling. Participates thereby in diverse biological functions such as cell signal transduction, adhesion, migration and protein trafficking. Upon ligand binding, two signaling pathways are activated, one acting through phosphorylation by LYN leading to cell death or a survival pathway with activation of GSK3B. Plays an essential role essential for clustering of integrin ITGA4/ITGB1 and promotes its mobility in the plasma membrane of B-cells. In turn, participates in ITGA4/ITGB1 integrin-mediated antiapoptotic signaling through AKT. Also plays a role in the migration of dendritic cells and neutrophils to draining lymph nodes, as well as in their integrin-mediated adhesion. Negatively regulates IL-6 responses through direct interaction with SOCS3 thereby preventing constitutive IL-6 signaling. Alternatively, inhibition of IL-6 signaling can also occur via interaction and stabilization of DECTIN1/CLEC7A at the cell membrane to inhibit its ability to promote the production of IL-6. This is Leukocyte antigen CD37 (CD37) from Homo sapiens (Human).